A 132-amino-acid chain; its full sequence is Small ribosomal subunit protein uS11 (132 aa).

Positions 1 to 16 (MAAGMKGKRSRRRKER) are enriched in basic residues. Residues 1-20 (MAAGMKGKRSRRRKERKNVE) form a disordered region.

Belongs to the universal ribosomal protein uS11 family. Part of the 30S ribosomal subunit. Interacts with proteins S7 and S18. Binds to IF-3.

In terms of biological role, located on the platform of the 30S subunit, it bridges several disparate RNA helices of the 16S rRNA. Forms part of the Shine-Dalgarno cleft in the 70S ribosome. The chain is Small ribosomal subunit protein uS11 from Clostridium botulinum (strain Hall / ATCC 3502 / NCTC 13319 / Type A).